The following is a 99-amino-acid chain: Biogenesis of lysosome-related organelles complex 1 subunit SNN1 (99 aa).

Residues 34-94 (SINELRESQA…VVLKRYEKMV (61 aa)) adopt a coiled-coil conformation.

The protein belongs to the SNAPIN family. In terms of assembly, component of the biogenesis of lysosome-related organelles complex-1 (BLOC-1).

The protein localises to the endosome. In terms of biological role, component of the biogenesis of lysosome-related organelles complex-1 (BLOC-1), a complex involved in endosomal cargo sorting. This chain is Biogenesis of lysosome-related organelles complex 1 subunit SNN1 (SNN1), found in Kluyveromyces lactis (strain ATCC 8585 / CBS 2359 / DSM 70799 / NBRC 1267 / NRRL Y-1140 / WM37) (Yeast).